A 312-amino-acid chain; its full sequence is Apolipoprotein E (312 aa).

Positions 1 to 18 (MKALWAVLLVTLLAGCLA) are cleaved as a signal peptide. 8 repeat units span residues 72-93 (VLME…EQLG), 94-115 (PVAE…ARLG), 116-137 (ADME…TMLG), 138-159 (QSTE…KRLM), 160-181 (RDAE…EGAE), 182-203 (RGVS…QRTA), 204-225 (NLGA…DRIR), and 226-247 (GRLE…EHME). The tract at residues 72–247 (VLMEDTMTEV…RLEEVREHME (176 aa)) is 8 X 22 AA approximate tandem repeats. M135 is modified (methionine sulfoxide). Phosphoserine is present on S139. An LDL and other lipoprotein receptors binding region spans residues 150-160 (HLRKMRKRLMR). Position 154–157 (154–157 (MRKR)) interacts with heparin. The interval 202–282 (TANLGAGAAQ…GWFEPIVEDM (81 aa)) is lipid-binding and lipoprotein association. Residue 221-228 (GDRIRGRL) coordinates heparin. The tract at residues 258–312 (QQIRLQAEIFQARLKGWFEPIVEDMHRQWANLMEKIQASVATNPIISTPMPQENQ) is homooligomerization. Positions 270 to 282 (RLKGWFEPIVEDM) are specificity for association with VLDL.

The protein belongs to the apolipoprotein A1/A4/E family. As to quaternary structure, homotetramer. May interact with ABCA1; functionally associated with ABCA1 in the biogenesis of HDLs. May interact with APP/A4 amyloid-beta peptide; the interaction is extremely stable in vitro but its physiological significance is unclear. May interact with MAPT. May interact with MAP2. In the cerebrospinal fluid, interacts with secreted SORL1. Interacts with PMEL; this allows the loading of PMEL luminal fragment on ILVs to induce fibril nucleation. Post-translationally, APOE exists as multiple glycosylated and sialylated glycoforms within cells and in plasma. The extent of glycosylation and sialylation are tissue and context specific. In terms of processing, glycated in plasma VLDL. Phosphorylated by FAM20C in the extracellular medium.

Its subcellular location is the secreted. It localises to the extracellular space. The protein localises to the extracellular matrix. The protein resides in the extracellular vesicle. It is found in the endosome. Its subcellular location is the multivesicular body. Its function is as follows. APOE is an apolipoprotein, a protein associating with lipid particles, that mainly functions in lipoprotein-mediated lipid transport between organs via the plasma and interstitial fluids. APOE is a core component of plasma lipoproteins and is involved in their production, conversion and clearance. Apolipoproteins are amphipathic molecules that interact both with lipids of the lipoprotein particle core and the aqueous environment of the plasma. As such, APOE associates with chylomicrons, chylomicron remnants, very low density lipoproteins (VLDL) and intermediate density lipoproteins (IDL) but shows a preferential binding to high-density lipoproteins (HDL). It also binds a wide range of cellular receptors including the LDL receptor/LDLR, the LDL receptor-related proteins LRP1, LRP2 and LRP8 and the very low-density lipoprotein receptor/VLDLR that mediate the cellular uptake of the APOE-containing lipoprotein particles. Finally, APOE also has a heparin-binding activity and binds heparan-sulfate proteoglycans on the surface of cells, a property that supports the capture and the receptor-mediated uptake of APOE-containing lipoproteins by cells. A main function of APOE is to mediate lipoprotein clearance through the uptake of chylomicrons, VLDLs, and HDLs by hepatocytes. APOE is also involved in the biosynthesis by the liver of VLDLs as well as their uptake by peripheral tissues ensuring the delivery of triglycerides and energy storage in muscle, heart and adipose tissues. By participating in the lipoprotein-mediated distribution of lipids among tissues, APOE plays a critical role in plasma and tissues lipid homeostasis. APOE is also involved in two steps of reverse cholesterol transport, the HDLs-mediated transport of cholesterol from peripheral tissues to the liver, and thereby plays an important role in cholesterol homeostasis. First, it is functionally associated with ABCA1 in the biogenesis of HDLs in tissues. Second, it is enriched in circulating HDLs and mediates their uptake by hepatocytes. APOE also plays an important role in lipid transport in the central nervous system, regulating neuron survival and sprouting. In Mus pahari (Gairdner's shrew-mouse), this protein is Apolipoprotein E (Apoe).